The primary structure comprises 921 residues: Isoleucine--tRNA ligase (921 aa).

The 'HIGH' region motif lies at 57–67 (PYANGELHMGH). Position 552 (E552) interacts with L-isoleucyl-5'-AMP. Positions 593–597 (KMSKS) match the 'KMSKS' region motif. Residue K596 participates in ATP binding. C888, C891, C908, and C911 together coordinate Zn(2+).

This sequence belongs to the class-I aminoacyl-tRNA synthetase family. IleS type 1 subfamily. Monomer. The cofactor is Zn(2+).

It localises to the cytoplasm. The enzyme catalyses tRNA(Ile) + L-isoleucine + ATP = L-isoleucyl-tRNA(Ile) + AMP + diphosphate. Functionally, catalyzes the attachment of isoleucine to tRNA(Ile). As IleRS can inadvertently accommodate and process structurally similar amino acids such as valine, to avoid such errors it has two additional distinct tRNA(Ile)-dependent editing activities. One activity is designated as 'pretransfer' editing and involves the hydrolysis of activated Val-AMP. The other activity is designated 'posttransfer' editing and involves deacylation of mischarged Val-tRNA(Ile). The sequence is that of Isoleucine--tRNA ligase from Listeria innocua serovar 6a (strain ATCC BAA-680 / CLIP 11262).